Reading from the N-terminus, the 205-residue chain is Suppressor of IKBKE 1 (205 aa).

Coiled-coil stretches lie at residues 4-32 (TIDK…LIDQ) and 154-192 (KAIQ…ESLR).

This sequence belongs to the SIKE family. In terms of assembly, interacts with IKBKE and TBK1 via its coiled coil region. Interaction with TBK1 is disrupted upon viral infection or TLR3 stimulation. Interacts with CDC42BPB. Associates with the STRIPAK core complex composed of PP2A catalytic and scaffolding subunits, the striatins (PP2A regulatory subunits), the striatin-associated proteins MOB4, STRIP1 and STRIP2, PDCD10 and members of the STE20 kinases, such as STK24 and STK26.

Its subcellular location is the cytoplasm. Functionally, suppressor of IKK-epsilon. Associates with the striatin-interacting phosphatase and kinase (STRIPAK) core complex, forming the extended (SIKE1:SLMAP)STRIPAK complex. The (SIKE1:SLMAP)STRIPAK complex dephosphorylates STK3 leading to the inhibition of Hippo signaling and the control of cell growth. This Xenopus laevis (African clawed frog) protein is Suppressor of IKBKE 1 (sike1).